Consider the following 195-residue polypeptide: Sec-independent protein translocase protein TatB (195 aa).

A helical membrane pass occupies residues 1–21; it reads MFDIGFSELALIAVVALVVLG. Residues 130–195 form a disordered region; the sequence is EPGSAQPHTP…SSTSPQEKTP (66 aa). Low complexity-rich tracts occupy residues 145-157 and 175-195; these read PVVA…APAP and TTHA…EKTP.

This sequence belongs to the TatB family. As to quaternary structure, the Tat system comprises two distinct complexes: a TatABC complex, containing multiple copies of TatA, TatB and TatC subunits, and a separate TatA complex, containing only TatA subunits. Substrates initially bind to the TatABC complex, which probably triggers association of the separate TatA complex to form the active translocon.

It localises to the cell inner membrane. In terms of biological role, part of the twin-arginine translocation (Tat) system that transports large folded proteins containing a characteristic twin-arginine motif in their signal peptide across membranes. Together with TatC, TatB is part of a receptor directly interacting with Tat signal peptides. TatB may form an oligomeric binding site that transiently accommodates folded Tat precursor proteins before their translocation. The sequence is that of Sec-independent protein translocase protein TatB from Xanthomonas campestris pv. campestris (strain 8004).